The sequence spans 314 residues: Glutathione synthetase (314 aa).

The region spanning E125–E311 is the ATP-grasp domain. Residue F151–G208 participates in ATP binding. Positions 282 and 284 each coordinate Mg(2+).

The protein belongs to the prokaryotic GSH synthase family. Mg(2+) is required as a cofactor. The cofactor is Mn(2+).

It carries out the reaction gamma-L-glutamyl-L-cysteine + glycine + ATP = glutathione + ADP + phosphate + H(+). It participates in sulfur metabolism; glutathione biosynthesis; glutathione from L-cysteine and L-glutamate: step 2/2. This chain is Glutathione synthetase, found in Xylella fastidiosa (strain 9a5c).